We begin with the raw amino-acid sequence, 248 residues long: Ribonuclease PH (248 aa).

Phosphate is bound by residues arginine 93 and glycine 131 to arginine 133.

Belongs to the RNase PH family. Homohexameric ring arranged as a trimer of dimers.

The enzyme catalyses tRNA(n+1) + phosphate = tRNA(n) + a ribonucleoside 5'-diphosphate. Phosphorolytic 3'-5' exoribonuclease that plays an important role in tRNA 3'-end maturation. Removes nucleotide residues following the 3'-CCA terminus of tRNAs; can also add nucleotides to the ends of RNA molecules by using nucleoside diphosphates as substrates, but this may not be physiologically important. Probably plays a role in initiation of 16S rRNA degradation (leading to ribosome degradation) during starvation. This is Ribonuclease PH from Bifidobacterium longum (strain NCC 2705).